The primary structure comprises 197 residues: Recombination protein RecR (197 aa).

Residues 54-69 (CQQCNNYTEQTLCTLC) form a C4-type zinc finger. One can recognise a Toprim domain in the interval 77–172 (TLLCVVESPA…NISQLAHGIP (96 aa)).

It belongs to the RecR family.

Its function is as follows. May play a role in DNA repair. It seems to be involved in an RecBC-independent recombinational process of DNA repair. It may act with RecF and RecO. The polypeptide is Recombination protein RecR (Legionella pneumophila (strain Paris)).